The primary structure comprises 136 residues: Holo-[acyl-carrier-protein] synthase (136 aa).

Residues Asp8 and Glu58 each coordinate Mg(2+).

It belongs to the P-Pant transferase superfamily. AcpS family. Mg(2+) serves as cofactor.

Its subcellular location is the cytoplasm. It catalyses the reaction apo-[ACP] + CoA = holo-[ACP] + adenosine 3',5'-bisphosphate + H(+). Transfers the 4'-phosphopantetheine moiety from coenzyme A to a Ser of acyl-carrier-protein. This is Holo-[acyl-carrier-protein] synthase from Leuconostoc mesenteroides subsp. mesenteroides (strain ATCC 8293 / DSM 20343 / BCRC 11652 / CCM 1803 / JCM 6124 / NCDO 523 / NBRC 100496 / NCIMB 8023 / NCTC 12954 / NRRL B-1118 / 37Y).